A 226-amino-acid polypeptide reads, in one-letter code: ATP synthase subunit a (226 aa).

The next 5 membrane-spanning stretches (helical) occupy residues 20–40 (LNWL…WLLP), 74–94 (FISL…PYIF), 100–120 (LTLT…YGWI), 158–180 (LAVR…GNTG), and 197–217 (IALL…FAVL).

Belongs to the ATPase A chain family. F-type ATPases have 2 components, CF(1) - the catalytic core - and CF(0) - the membrane proton channel. CF(1) has five subunits: alpha(3), beta(3), gamma(1), delta(1), epsilon(1). CF(0) has three main subunits: a, b and c.

Its subcellular location is the mitochondrion inner membrane. Mitochondrial membrane ATP synthase (F(1)F(0) ATP synthase or Complex V) produces ATP from ADP in the presence of a proton gradient across the membrane which is generated by electron transport complexes of the respiratory chain. F-type ATPases consist of two structural domains, F(1) - containing the extramembraneous catalytic core and F(0) - containing the membrane proton channel, linked together by a central stalk and a peripheral stalk. During catalysis, ATP synthesis in the catalytic domain of F(1) is coupled via a rotary mechanism of the central stalk subunits to proton translocation. Key component of the proton channel; it may play a direct role in the translocation of protons across the membrane. The protein is ATP synthase subunit a (ATP6) of Anopheles quadrimaculatus (Common malaria mosquito).